The primary structure comprises 304 residues: Protease HtpX homolog 1 (304 aa).

The next 2 membrane-spanning stretches (helical) occupy residues 17-37 and 39-59; these read VTLFLLGLLYVGFVAALIALL and SWVLVVVIVALVFGAQYWFSD. Position 140 (His140) interacts with Zn(2+). Glu141 is an active-site residue. Zn(2+) is bound at residue His144. The next 2 membrane-spanning stretches (helical) occupy residues 151-171 and 186-206; these read AVITVASFLGVIAGLIVRFAF and AVLAVVMGVSAAVYALSFLLI. Zn(2+) is bound at residue Glu214.

This sequence belongs to the peptidase M48B family. Zn(2+) serves as cofactor.

It is found in the cell membrane. This is Protease HtpX homolog 1 from Streptomyces coelicolor (strain ATCC BAA-471 / A3(2) / M145).